The sequence spans 447 residues: Glutamate-1-semialdehyde 2,1-aminomutase (447 aa).

Lys-277 is subject to N6-(pyridoxal phosphate)lysine.

Belongs to the class-III pyridoxal-phosphate-dependent aminotransferase family. HemL subfamily. As to quaternary structure, homodimer. Requires pyridoxal 5'-phosphate as cofactor.

It localises to the cytoplasm. The catalysed reaction is (S)-4-amino-5-oxopentanoate = 5-aminolevulinate. It participates in porphyrin-containing compound metabolism; protoporphyrin-IX biosynthesis; 5-aminolevulinate from L-glutamyl-tRNA(Glu): step 2/2. The chain is Glutamate-1-semialdehyde 2,1-aminomutase from Arthrobacter sp. (strain FB24).